The sequence spans 312 residues: MKITAKAWAKTNLHLGVGPARDDGFHELMTVFQTIDLFDTVTLTTLDEELVEEGSVVKQLSVTGARGVPEDASNLAWRAVDALVKRRAEKTPLSAVSLHISKGIPVAGGMAGGSADAAATLRAVDAWIGPFGEDTLLEVAAELGSDVPFCLLGGTMRGTGRGEQLVDMLTRGKLHWVVAAMAHGLSTPEVFKKHDELNPESHMDISDLSAALLTGNTAEVGRWLHNDLTSAALSLRPELRSVLQEGIRSGAHAGIVSGSGPTTVFLCESEHKAQDVKEALIDAGQVYAAYTATGPAASTADQRGAHILTVSQ.

The active site involves Lys-10. 105 to 115 (PVAGGMAGGSA) lines the ATP pocket. The active site involves Asp-146.

Belongs to the GHMP kinase family. IspE subfamily.

It catalyses the reaction 4-CDP-2-C-methyl-D-erythritol + ATP = 4-CDP-2-C-methyl-D-erythritol 2-phosphate + ADP + H(+). Its pathway is isoprenoid biosynthesis; isopentenyl diphosphate biosynthesis via DXP pathway; isopentenyl diphosphate from 1-deoxy-D-xylulose 5-phosphate: step 3/6. Its function is as follows. Catalyzes the phosphorylation of the position 2 hydroxy group of 4-diphosphocytidyl-2C-methyl-D-erythritol. In Corynebacterium glutamicum (strain R), this protein is 4-diphosphocytidyl-2-C-methyl-D-erythritol kinase.